We begin with the raw amino-acid sequence, 249 residues long: Probable transcriptional regulatory protein DICTH_1505 (249 aa).

Belongs to the TACO1 family.

The protein resides in the cytoplasm. In Dictyoglomus thermophilum (strain ATCC 35947 / DSM 3960 / H-6-12), this protein is Probable transcriptional regulatory protein DICTH_1505.